The chain runs to 320 residues: F-box protein At2g02240 (320 aa).

Positions 58–104 (TSPFDVLPEDCISNIISFTSPRDACVAASVSKTFESAVSSDCVWDKF) constitute an F-box domain.

This is F-box protein At2g02240 from Arabidopsis thaliana (Mouse-ear cress).